A 433-amino-acid polypeptide reads, in one-letter code: Histone acetyltransferase type B subunit 2 (433 aa).

5 WD repeats span residues 131 to 171, 184 to 224, 234 to 274, 281 to 321, and 325 to 365; these read EHPG…LDPT, GHEA…ADSR, HHTQ…TNKA, GHLD…EKVH, and GHND…EEQL. The interval 367–371 is interaction with the histone H4 N-terminus; that stretch reads DDQDD. The WD 6 repeat unit spans residues 382–422; it reads GHTNHLADFSWNPNEPWLVASAAEDNLLQIWKVAESIVGKD.

Belongs to the WD repeat RBAP46/RBAP48/MSI1 family. In terms of assembly, component of the HAT-B complex composed of at least HAT1 and HAT2. The HAT-B complex binds to histone H4 tail.

It is found in the cytoplasm. The protein localises to the nucleus. Its function is as follows. Regulatory subunit of the histone acetylase B (HAT-B) complex. The complex acetylates 'Lys-12' of histone H4 which is required for telomeric silencing. The polypeptide is Histone acetyltransferase type B subunit 2 (HAT2) (Gibberella zeae (strain ATCC MYA-4620 / CBS 123657 / FGSC 9075 / NRRL 31084 / PH-1) (Wheat head blight fungus)).